Consider the following 152-residue polypeptide: Transcriptional regulator MraZ (152 aa).

2 consecutive SpoVT-AbrB domains span residues 5–52 (ASAI…PIHE) and 81–124 (AHEV…DEQS).

This sequence belongs to the MraZ family. Forms oligomers.

The protein localises to the cytoplasm. It localises to the nucleoid. The polypeptide is Transcriptional regulator MraZ (Shewanella baltica (strain OS195)).